Reading from the N-terminus, the 219-residue chain is Flagellin B4 (219 aa).

Residues 1-5 (MHRKG) constitute a propeptide that is removed on maturation.

It belongs to the archaeal flagellin family.

Its subcellular location is the archaeal flagellum. Its function is as follows. Flagellin is the subunit protein which polymerizes to form the filaments of archaeal flagella. The protein is Flagellin B4 (flaB4) of Pyrococcus abyssi (strain GE5 / Orsay).